Consider the following 50-residue polypeptide: Sperm protamine P1 (50 aa).

2 disulfide bridges follow: cysteine 7–cysteine 15 and cysteine 39–cysteine 47.

The protein belongs to the protamine P1 family. In terms of assembly, cross-linked by interchain disulfide bonds around the DNA-helix. Testis.

Its subcellular location is the nucleus. It localises to the chromosome. Its function is as follows. Protamines substitute for histones in the chromatin of sperm during the haploid phase of spermatogenesis. They compact sperm DNA into a highly condensed, stable and inactive complex. This chain is Sperm protamine P1 (PRM1), found in Oryctolagus cuniculus (Rabbit).